Consider the following 393-residue polypeptide: Na(+)/H(+) antiporter NhaA (393 aa).

The next 11 membrane-spanning stretches (helical) occupy residues 14–34, 60–80, 96–116, 125–145, 155–175, 179–199, 218–238, 263–283, 292–312, 330–350, and 362–382; these read AAGM…NWSV, LLLW…GLEV, MLPL…FLLF, AGWA…LTLL, VFLL…IALF, QVFW…AYMN, VCIL…GFFI, FLIV…GIVL, LGIA…FSWL, IVAV…ITLL, and YAKL…YLAL.

Belongs to the NhaA Na(+)/H(+) (TC 2.A.33) antiporter family.

The protein localises to the cell inner membrane. It carries out the reaction Na(+)(in) + 2 H(+)(out) = Na(+)(out) + 2 H(+)(in). Na(+)/H(+) antiporter that extrudes sodium in exchange for external protons. This Pectobacterium atrosepticum (strain SCRI 1043 / ATCC BAA-672) (Erwinia carotovora subsp. atroseptica) protein is Na(+)/H(+) antiporter NhaA.